The chain runs to 268 residues: Indole-3-glycerol phosphate synthase (268 aa).

It belongs to the TrpC family.

The catalysed reaction is 1-(2-carboxyphenylamino)-1-deoxy-D-ribulose 5-phosphate + H(+) = (1S,2R)-1-C-(indol-3-yl)glycerol 3-phosphate + CO2 + H2O. It participates in amino-acid biosynthesis; L-tryptophan biosynthesis; L-tryptophan from chorismate: step 4/5. In Acinetobacter baumannii (strain SDF), this protein is Indole-3-glycerol phosphate synthase.